The chain runs to 312 residues: Glyoxylate/hydroxypyruvate reductase A (312 aa).

Residue R227 is part of the active site. Residue H275 is the Proton donor of the active site.

Belongs to the D-isomer specific 2-hydroxyacid dehydrogenase family. GhrA subfamily.

The protein localises to the cytoplasm. The catalysed reaction is glycolate + NADP(+) = glyoxylate + NADPH + H(+). It carries out the reaction (R)-glycerate + NAD(+) = 3-hydroxypyruvate + NADH + H(+). It catalyses the reaction (R)-glycerate + NADP(+) = 3-hydroxypyruvate + NADPH + H(+). Functionally, catalyzes the NADPH-dependent reduction of glyoxylate and hydroxypyruvate into glycolate and glycerate, respectively. In Klebsiella pneumoniae subsp. pneumoniae (strain ATCC 700721 / MGH 78578), this protein is Glyoxylate/hydroxypyruvate reductase A.